We begin with the raw amino-acid sequence, 443 residues long: D-serine dehydratase (443 aa).

Lysine 118 carries the N6-(pyridoxal phosphate)lysine modification.

This sequence belongs to the serine/threonine dehydratase family. DsdA subfamily. As to quaternary structure, monomer. Pyridoxal 5'-phosphate serves as cofactor.

It catalyses the reaction D-serine = pyruvate + NH4(+). This is D-serine dehydratase from Yersinia enterocolitica serotype O:8 / biotype 1B (strain NCTC 13174 / 8081).